The sequence spans 355 residues: DNA polymerase IV (355 aa).

Positions 7–188 (IIHIDMDCFY…LPVRKLFGVG (182 aa)) constitute a UmuC domain. Mg(2+) contacts are provided by Asp-11 and Asp-106. Glu-107 is a catalytic residue.

This sequence belongs to the DNA polymerase type-Y family. Monomer. Mg(2+) is required as a cofactor.

The protein resides in the cytoplasm. It carries out the reaction DNA(n) + a 2'-deoxyribonucleoside 5'-triphosphate = DNA(n+1) + diphosphate. Its function is as follows. Poorly processive, error-prone DNA polymerase involved in untargeted mutagenesis. Copies undamaged DNA at stalled replication forks, which arise in vivo from mismatched or misaligned primer ends. These misaligned primers can be extended by PolIV. Exhibits no 3'-5' exonuclease (proofreading) activity. May be involved in translesional synthesis, in conjunction with the beta clamp from PolIII. The chain is DNA polymerase IV from Legionella pneumophila subsp. pneumophila (strain Philadelphia 1 / ATCC 33152 / DSM 7513).